The sequence spans 106 residues: Small membrane A-kinase anchor protein (106 aa).

Gly-2 is lipidated: N-myristoyl glycine. Cys-3 carries S-palmitoyl cysteine lipidation. Ser-40 carries the post-translational modification Phosphoserine. A PKA-RI-binding region spans residues 62–85 (ALILEFADRLASEIVEDALQQWAC). The residue at position 98 (Ser-98) is a Phosphoserine.

Belongs to the small membrane AKAP family. As to quaternary structure, interacts with PKA type I regulatory subunits PRKAR1A and PRKAR1B. Also binds to type II regulatory subunits, but at a tenfold lower affinity. In terms of processing, may be palmitoylated at Cys-3. In terms of tissue distribution, widely expressed, with very low levels in spleen and liver.

Its subcellular location is the cell membrane. Its function is as follows. Binds to type I regulatory subunits of protein kinase A (PKA-RI) and may anchor/target them to the plasma membrane. The chain is Small membrane A-kinase anchor protein from Mus musculus (Mouse).